The chain runs to 446 residues: DNA repair protein RadA (446 aa).

Residues 10-27 (CSNCGNTSPKWSGQCFDC) form a C4-type zinc finger. 91 to 98 (GDPGIGKS) contacts ATP. The RadA KNRFG motif motif lies at 250–254 (KNRFG). The interval 349 to 446 (EVYLSIAGGL…HLKDLKEIIR (98 aa)) is lon-protease-like.

The protein belongs to the RecA family. RadA subfamily.

Its function is as follows. DNA-dependent ATPase involved in processing of recombination intermediates, plays a role in repairing DNA breaks. Stimulates the branch migration of RecA-mediated strand transfer reactions, allowing the 3' invading strand to extend heteroduplex DNA faster. Binds ssDNA in the presence of ADP but not other nucleotides, has ATPase activity that is stimulated by ssDNA and various branched DNA structures, but inhibited by SSB. Does not have RecA's homology-searching function. The protein is DNA repair protein RadA of Rickettsia felis (strain ATCC VR-1525 / URRWXCal2) (Rickettsia azadi).